The following is a 226-amino-acid chain: 7-cyano-7-deazaguanine synthase (226 aa).

10–20 contacts ATP; sequence LSGGLDSATAA. Positions 191, 199, 202, and 205 each coordinate Zn(2+).

This sequence belongs to the QueC family. Requires Zn(2+) as cofactor.

The enzyme catalyses 7-carboxy-7-deazaguanine + NH4(+) + ATP = 7-cyano-7-deazaguanine + ADP + phosphate + H2O + H(+). The protein operates within purine metabolism; 7-cyano-7-deazaguanine biosynthesis. In terms of biological role, catalyzes the ATP-dependent conversion of 7-carboxy-7-deazaguanine (CDG) to 7-cyano-7-deazaguanine (preQ(0)). The polypeptide is 7-cyano-7-deazaguanine synthase (Parasynechococcus marenigrum (strain WH8102)).